Consider the following 551-residue polypeptide: Chaperonin GroEL 4 (551 aa).

ATP is bound by residues Thr-30–Pro-33, Lys-51, Asp-87–Thr-91, Gly-415, and Asp-495.

The protein belongs to the chaperonin (HSP60) family. As to quaternary structure, forms a cylinder of 14 subunits composed of two heptameric rings stacked back-to-back. Interacts with the co-chaperonin GroES.

Its subcellular location is the cytoplasm. It carries out the reaction ATP + H2O + a folded polypeptide = ADP + phosphate + an unfolded polypeptide.. Together with its co-chaperonin GroES, plays an essential role in assisting protein folding. The GroEL-GroES system forms a nano-cage that allows encapsulation of the non-native substrate proteins and provides a physical environment optimized to promote and accelerate protein folding. The chain is Chaperonin GroEL 4 from Mesorhizobium japonicum (strain LMG 29417 / CECT 9101 / MAFF 303099) (Mesorhizobium loti (strain MAFF 303099)).